The following is a 274-amino-acid chain: Glutamate--cysteine ligase regulatory subunit (274 aa).

Serine 59 is modified (phosphoserine). At lysine 263 the chain carries N6-acetyllysine.

Belongs to the aldo/keto reductase family. Glutamate--cysteine ligase light chain subfamily. As to quaternary structure, heterodimer of a catalytic heavy chain and a regulatory light chain.

The protein operates within sulfur metabolism; glutathione biosynthesis; glutathione from L-cysteine and L-glutamate: step 1/2. In Mus musculus (Mouse), this protein is Glutamate--cysteine ligase regulatory subunit (Gclm).